The chain runs to 359 residues: uncharacterized protein (359 aa).

3 disordered regions span residues 90-117, 132-161, and 235-359; these read QESPVRGMSPAPNGAKVPPRPHSEPSRK, IKKEEIKAKRPPSPPKACSTPGSCSSGMTS, and TSME…THRR. Positions 151–161 are enriched in polar residues; that stretch reads TPGSCSSGMTS. The span at 245 to 259 shows a compositional bias: low complexity; the sequence is KPPTVKSPPTVKLPP. A compositionally biased stretch (basic and acidic residues) spans 286–299; the sequence is EENKEVPKEAEHKP.

This is an uncharacterized protein from Homo sapiens (Human).